We begin with the raw amino-acid sequence, 91 residues long: Probable Fe(2+)-trafficking protein (91 aa).

It belongs to the Fe(2+)-trafficking protein family.

Could be a mediator in iron transactions between iron acquisition and iron-requiring processes, such as synthesis and/or repair of Fe-S clusters in biosynthetic enzymes. The sequence is that of Probable Fe(2+)-trafficking protein from Shewanella amazonensis (strain ATCC BAA-1098 / SB2B).